A 367-amino-acid polypeptide reads, in one-letter code: DNA replication and repair protein RecF (367 aa).

30–37 (GANGSGKT) serves as a coordination point for ATP.

It belongs to the RecF family.

Its subcellular location is the cytoplasm. The RecF protein is involved in DNA metabolism; it is required for DNA replication and normal SOS inducibility. RecF binds preferentially to single-stranded, linear DNA. It also seems to bind ATP. In Pseudomonas putida (strain W619), this protein is DNA replication and repair protein RecF.